Reading from the N-terminus, the 278-residue chain is SPX domain-containing protein 2 (278 aa).

Positions 1–162 (MKFGKSLSSQ…GSMIRLPFVQ (162 aa)) constitute an SPX domain. Disordered stretches follow at residues 191–242 (PTNE…KSTV) and 255–278 (GSST…EPGR).

As to quaternary structure, interacts (via SPX domain) with PHR2 (via C-terminus). Interacts with RLI1 in the nucleus to prevents its positive regulation of leaf inclination during phosphate (Pi) starvation.

Its subcellular location is the nucleus. In terms of biological role, inhibits PHR2 DNA-binding activity via a phosphate (Pi)-dependent protein interaction. Together with SPX1, plays a negative role in the regulation of leaf inclination by preventing RLI1 transcription factor activity in Pi depleted conditions. The polypeptide is SPX domain-containing protein 2 (Oryza sativa subsp. indica (Rice)).